We begin with the raw amino-acid sequence, 100 residues long: MELTPREKDKLFLFTAALLAERRKARGLKLNYPEAVALISAAVLEGARDGKTVAQLMSEGREVLTRADVMDGVPEMISDIQVEATFPDGTKLVTVHQPIA.

Belongs to the urease gamma subunit family. In terms of assembly, heterotrimer of UreA (gamma), UreB (beta) and UreC (alpha) subunits. Three heterotrimers associate to form the active enzyme.

The protein resides in the cytoplasm. It carries out the reaction urea + 2 H2O + H(+) = hydrogencarbonate + 2 NH4(+). Its pathway is nitrogen metabolism; urea degradation; CO(2) and NH(3) from urea (urease route): step 1/1. In Paracidovorax citrulli (strain AAC00-1) (Acidovorax citrulli), this protein is Urease subunit gamma.